The chain runs to 484 residues: 3-isopropylmalate dehydratase large subunit (484 aa).

The [4Fe-4S] cluster site is built by Cys352, Cys412, and Cys415. Residues Gly462–Ala484 are disordered.

It belongs to the aconitase/IPM isomerase family. LeuC type 1 subfamily. Heterodimer of LeuC and LeuD. [4Fe-4S] cluster serves as cofactor.

It catalyses the reaction (2R,3S)-3-isopropylmalate = (2S)-2-isopropylmalate. The protein operates within amino-acid biosynthesis; L-leucine biosynthesis; L-leucine from 3-methyl-2-oxobutanoate: step 2/4. Its function is as follows. Catalyzes the isomerization between 2-isopropylmalate and 3-isopropylmalate, via the formation of 2-isopropylmaleate. This chain is 3-isopropylmalate dehydratase large subunit, found in Arthrobacter sp. (strain FB24).